Reading from the N-terminus, the 432-residue chain is MQVSVETTQGLGRRVTITIAADSIENAVKSELVNVAKKVRIDGFRKGKVPMNVVAQRYGASVRQDVLGDLMSRHFVDAIIKEKINPAGAPNYVPGEYKLGEDFTYAVEFEVYPEVELQGLDAIEVEKPVVEVTDADVDTMLETLRKQQATWKDKDGAVDAEDRVTIDFTGSVDGEEFEGGKASDFVLAMGQGRMIPGFEDGIKGHKAGEEFTIDVTFPEEYHAENLKGKAAKFVINLKKVEERELPELTEEFIKRFGVEDGSVAGLRAEVRKNMERELKGAVRNRVKSQAIEGLVKANEIDVPAALIDSEIDVLRRQAAQRFGGNEKQALELPRELFEEQAKRRVVVGLLLGEVIRTNELKADEERVKGLIEEMASAYEDPSEVVEFYSKNKELMDNMRNVALEEQAVEAVLAKAKVSEKATSFNELMNQQA.

A PPIase FKBP-type domain is found at 161-246 (EDRVTIDFTG…LKKVEERELP (86 aa)).

Belongs to the FKBP-type PPIase family. Tig subfamily.

The protein localises to the cytoplasm. The enzyme catalyses [protein]-peptidylproline (omega=180) = [protein]-peptidylproline (omega=0). Functionally, involved in protein export. Acts as a chaperone by maintaining the newly synthesized protein in an open conformation. Functions as a peptidyl-prolyl cis-trans isomerase. The protein is Trigger factor of Klebsiella pneumoniae (strain 342).